Reading from the N-terminus, the 138-residue chain is MRLLHTMLRVGNLEKSLDFYQNVLGMKLLRRKDYPEGRFTLAFVGYGDETDSTVLELTHNWDTERYDLGNAYGHIAVEVDDAYEACERVKRQGGNVVREAGPMKHGTTVIAFVEDPDGYKIEFIQKKSGDDSVAYQTA.

The VOC domain occupies 2 to 126 (RLLHTMLRVG…DGYKIEFIQK (125 aa)). H5 lines the Ni(2+) pocket. A substrate-binding site is contributed by R9. E56 contributes to the Ni(2+) binding site. The substrate site is built by N60 and H74. Ni(2+)-binding residues include H74 and E122. The active-site Proton donor/acceptor is E122.

The protein belongs to the glyoxalase I family. Ni(2+) is required as a cofactor.

The catalysed reaction is (R)-S-lactoylglutathione = methylglyoxal + glutathione. It participates in secondary metabolite metabolism; methylglyoxal degradation; (R)-lactate from methylglyoxal: step 1/2. Its function is as follows. Catalyzes the conversion of hemimercaptal, formed from methylglyoxal and glutathione, to S-lactoylglutathione. This is Lactoylglutathione lyase (gloA) from Neisseria meningitidis serogroup A / serotype 4A (strain DSM 15465 / Z2491).